Reading from the N-terminus, the 532-residue chain is Neutral amino acid transporter A (532 aa).

The residue at position 1 (Met1) is an N-acetylmethionine. The tract at residues 1–29 (MEKSGETNGYLDGTQAEPAAGPRTPETAM) is disordered. The Cytoplasmic portion of the chain corresponds to 1–41 (MEKSGETNGYLDGTQAEPAAGPRTPETAMGKSQRCASFFRR). Helical transmembrane passes span 42–62 (HALVLLTVSGVLVGAGMGAAL), 88–108 (MIILPLVVCSLVSGAASLDAS), and 119–139 (AYFGLTTLSASALAVALAFII). Residues 140–216 (KPGAGAQTLQ…VTKEKIPVVT (77 aa)) lie on the Extracellular side of the membrane. Asn201 and Asn206 each carry an N-linked (GlcNAc...) asparagine glycan. 6 helical membrane passes run 217 to 237 (DVEGMNILGLVLFALVLGVAL), 257 to 277 (ATMVLVSWIMWYVPIGIMFLI), 298 to 318 (IFASMLGHVIHGGIVLPLVYF), 328 to 348 (FLLGLLTPFATAFATCSSSAT), 373 to 393 (IGATVNMDGAAIFQCVAAVFI), and 418 to 438 (VGAAGVPAGGVLTIAIILEAI). Residues 495–532 (EAIPNSKSEEETSPLVTHQNPAGPVAIAPELESKESVL) are disordered. A phosphoserine mark is found at Ser507, Ser527, and Ser530.

It belongs to the dicarboxylate/amino acid:cation symporter (DAACS) (TC 2.A.23) family. SLC1A4 subfamily.

The protein localises to the membrane. The protein resides in the melanosome. It carries out the reaction L-threonine(in) + Na(+)(in) = L-threonine(out) + Na(+)(out). It catalyses the reaction L-serine(in) + Na(+)(in) = L-serine(out) + Na(+)(out). The enzyme catalyses L-cysteine(in) + Na(+)(in) = L-cysteine(out) + Na(+)(out). The catalysed reaction is L-alanine(in) + Na(+)(in) = L-alanine(out) + Na(+)(out). It carries out the reaction L-proline(in) + Na(+)(in) = L-proline(out) + Na(+)(out). It catalyses the reaction 4-hydroxy-L-proline(in) + Na(+)(in) = 4-hydroxy-L-proline(out) + Na(+)(out). Its function is as follows. Sodium-dependent neutral amino-acid transporter that mediates transport of alanine, serine, cysteine, proline, hydroxyproline and threonine. This chain is Neutral amino acid transporter A (Slc1a4), found in Mus musculus (Mouse).